The chain runs to 832 residues: Cadherin-like protein 26 (832 aa).

The N-terminal stretch at 1–27 (MAMRSGRHPSLLLLLVLLLWLLQVSII) is a signal peptide. The Extracellular segment spans residues 28-614 (DSVQQETDDL…ELADAEVGLH (587 aa)). 4 Cadherin domains span residues 35-165 (DDLT…APQF), 166-275 (PEKE…RPAF), 276-396 (TQEN…PPAF), and 397-500 (HPQS…VPTL). N-linked (GlcNAc...) asparagine glycosylation is found at N81, N85, N171, and N177. N462 carries N-linked (GlcNAc...) asparagine glycosylation. Residues 615 to 635 (VGALFPVCAAFVALAVALLFL) traverse the membrane as a helical segment. Residues 636–832 (LRCYFVLEPK…EIYSESGVPS (197 aa)) are Cytoplasmic-facing. The segment at 813–832 (SLGSKATPFEEIYSESGVPS) is disordered.

As to quaternary structure, homodimer. Component of a cadherin:catenin adhesion complex composed of at least of CDH26, beta-catenin/CTNNB1, alpha-catenin/CTNNA1 and p120 catenin/CTNND1. Post-translationally, N-glycosylated. As to expression, expressed by epithelial cells of gastrointestinal tissue.

The protein resides in the cell membrane. Cadherins are calcium-dependent cell adhesion proteins. They preferentially interact with themselves in a homophilic manner in connecting cells; cadherins may thus contribute to the sorting of heterogeneous cell types. Ligand for integrins alpha-E/beta-7, ITGAE:ITGAB7, alpha-4/beta-7, ITGA4:ITGAB7 and alpha-4/beta-1, ITGA4:ITGAB1 through which modulates CD4(+) T cells activation. The sequence is that of Cadherin-like protein 26 (CDH26) from Homo sapiens (Human).